The following is a 297-amino-acid chain: tRNA dimethylallyltransferase (297 aa).

10 to 17 (GITASGKS) provides a ligand contact to ATP. Position 12–17 (12–17 (TASGKS)) interacts with substrate. Residues 36-39 (DSKQ) are interaction with substrate tRNA.

This sequence belongs to the IPP transferase family. Monomer. Mg(2+) serves as cofactor.

It carries out the reaction adenosine(37) in tRNA + dimethylallyl diphosphate = N(6)-dimethylallyladenosine(37) in tRNA + diphosphate. Functionally, catalyzes the transfer of a dimethylallyl group onto the adenine at position 37 in tRNAs that read codons beginning with uridine, leading to the formation of N6-(dimethylallyl)adenosine (i(6)A). This is tRNA dimethylallyltransferase from Wolbachia sp. subsp. Brugia malayi (strain TRS).